A 1487-amino-acid chain; its full sequence is Adhesion G protein-coupled receptor L2 (1487 aa).

Residues 1–25 (MVSSGCRMRSLWFIIIISFSPSTEG) form the signal peptide. Residues 26–855 (FSRAALPFGL…VHHLLLTVIT (830 aa)) are Extracellular-facing. Residues 41–130 (SCEGYSIDLR…KYLEVQYECV (90 aa)) enclose the SUEL-type lectin domain. The N-linked (GlcNAc...) asparagine glycan is linked to asparagine 99. The Olfactomedin-like domain occupies 139-398 (VCPGTLKAIV…ILRYSLEFGP (260 aa)). Over residues 423–439 (STTSSASQRGPVSSTAA) the composition is skewed to polar residues. A disordered region spans residues 423–461 (STTSSASQRGPVSSTAAGPQDGSRGTKPPPAVSTTKIPP). 2 N-linked (GlcNAc...) asparagine glycosylation sites follow: asparagine 524 and asparagine 735. One can recognise a GAIN-B domain in the interval 663–841 (TRVSMPTENI…AILMAHREIA (179 aa)). Intrachain disulfides connect cysteine 792/cysteine 823 and cysteine 811/cysteine 825. The interval 792 to 841 (CSFWNYSERTMMGYWSTQGCKLVDTNKTRTTCACSHLTNFAILMAHREIA) is GPS. The stachel stretch occupies residues 829–841 (TNFAILMAHREIA). A helical membrane pass occupies residues 856 to 876 (WVGIVVSLVCLAICIFTFCFF). Residues 877-884 (RGLQSDRN) lie on the Cytoplasmic side of the membrane. A helical transmembrane segment spans residues 885-905 (TIHKNLCINLFIAEFIFLIGI). Topologically, residues 906–911 (DKTKYT) are extracellular. The helical transmembrane segment at 912–932 (IACPVFAGLLHFFFLAAFSWM) threads the bilayer. Over 933–955 (CLEGVQLYLMLVEVFESEYSRKK) the chain is Cytoplasmic. The helical transmembrane segment at 956–976 (YYYVAGYLFPATVVGVSAAID) threads the bilayer. Topologically, residues 977–994 (YKSYGTVQACWLHVDNYF) are extracellular. A helical transmembrane segment spans residues 995 to 1015 (IWSFIGPVTFIILLNIIFLVI). The Cytoplasmic portion of the chain corresponds to 1016–1064 (TLCKMVKHSNTLKPDSSRLENINNYRVCDGYYNTDLPGYEDNKPFIKSW). The helical transmembrane segment at 1065-1085 (VLGAFALLCLLGLTWSFGLLF) threads the bilayer. Residues 1086-1090 (VNEET) are Extracellular-facing. A helical transmembrane segment spans residues 1091–1111 (VVMAYLFTAFNAFQGLFIFIF). A disordered region spans residues 1386–1430 (EADDHLQSPNRDSLYTSMPNLRDSPYPESSPDMAEDLSPSRRSEN). The segment covering 1392–1404 (QSPNRDSLYTSMP) has biased composition (polar residues). Phosphoserine occurs at positions 1402, 1437, and 1458.

This sequence belongs to the G-protein coupled receptor 2 family. Adhesion G-protein coupled receptor (ADGR) subfamily. As to quaternary structure, heterodimer of 2 chains generated by proteolytic processing; the large extracellular N-terminal fragment and the membrane-bound C-terminal fragment predominantly remain associated and non-covalently linked. In terms of processing, autoproteolytically processed at the GPS region of the GAIN-B domain; this cleavage modulates receptor activity. In terms of tissue distribution, ubiquitously expressed. In neurons, specifically localizes to dendritic domains of CA1 pyramidal neurons in the S. lacunosummoleculare.

The protein resides in the postsynaptic cell membrane. With respect to regulation, forms a heterodimer of 2 chains generated by proteolytic processing that remain associated through non-covalent interactions mediated by the GAIN-B domain. In the inactivated receptor, the Stachel sequence (also named stalk) is embedded in the GAIN-B domain, where it adopts a beta-strand conformation. On activation, the Stachel moves into the 7 transmembrane region and adopts a twisted hook-shaped configuration that forms contacts within the receptor, leading to coupling of a G-alpha protein, which activates signaling. The cleaved GAIN-B and N-terminal domains can then dissociate from the rest of the receptor. Orphan adhesion G-protein coupled receptor (aGPCR), which mediates synapse specificity. Ligand binding causes a conformation change that triggers signaling via guanine nucleotide-binding proteins (G proteins) and modulates the activity of downstream effectors. Following G-protein coupled receptor activation, associates with cell adhesion molecules that are expressed at the surface of adjacent cells to direct synapse specificity. Specifically mediates the establishment of perforant-path synapses on CA1-region pyramidal neurons in the hippocampus. Localizes to postsynaptic spines in excitatory synapses in the S.lacunosum-moleculare and interacts with presynaptic cell adhesion molecules, such as teneurins, promoting synapse formation. The polypeptide is Adhesion G protein-coupled receptor L2 (Mus musculus (Mouse)).